The chain runs to 106 residues: uncharacterized protein (106 aa).

Disordered regions lie at residues 33 to 64 (FKTSTRSTGKKRSKGSTSQDGKKQESLESRND) and 87 to 106 (NLTGLESGGSSPPFSLAVSK). The segment covering 52 to 63 (DGKKQESLESRN) has biased composition (basic and acidic residues). Residues 87–99 (NLTGLESGGSSPP) show a composition bias toward polar residues.

It is found in the mitochondrion. This is an uncharacterized protein from Arabidopsis thaliana (Mouse-ear cress).